The sequence spans 424 residues: UDP-N-acetylglucosamine 1-carboxyvinyltransferase 3 (424 aa).

22 to 23 (KN) contributes to the phosphoenolpyruvate binding site. Arg94 lines the UDP-N-acetyl-alpha-D-glucosamine pocket. Asp118 serves as the catalytic Proton donor. UDP-N-acetyl-alpha-D-glucosamine contacts are provided by residues 123 to 127 (RPVDQ), Asp306, and Leu328.

Belongs to the EPSP synthase family. MurA subfamily.

It localises to the cytoplasm. The enzyme catalyses phosphoenolpyruvate + UDP-N-acetyl-alpha-D-glucosamine = UDP-N-acetyl-3-O-(1-carboxyvinyl)-alpha-D-glucosamine + phosphate. Its pathway is cell wall biogenesis; peptidoglycan biosynthesis. Functionally, cell wall formation. Adds enolpyruvyl to UDP-N-acetylglucosamine. This chain is UDP-N-acetylglucosamine 1-carboxyvinyltransferase 3, found in Symbiobacterium thermophilum (strain DSM 24528 / JCM 14929 / IAM 14863 / T).